Reading from the N-terminus, the 194-residue chain is Adenylate kinase (194 aa).

10-15 (GAGKGT) contacts ATP. The interval 30–59 (STGDMLRAAVAQQSEIGKRAKAVMDAGQLV) is NMP. AMP is bound by residues Thr-31, Arg-36, 57–59 (QLV), 85–88 (GYPR), and Gln-92. The interval 126–142 (SRVAETIAKGGQVRSDD) is LID. ATP is bound at residue Arg-127. Positions 139 and 150 each coordinate AMP. Residue Ala-178 coordinates ATP.

Belongs to the adenylate kinase family. Monomer.

Its subcellular location is the cytoplasm. It catalyses the reaction AMP + ATP = 2 ADP. It participates in purine metabolism; AMP biosynthesis via salvage pathway; AMP from ADP: step 1/1. Catalyzes the reversible transfer of the terminal phosphate group between ATP and AMP. Plays an important role in cellular energy homeostasis and in adenine nucleotide metabolism. This chain is Adenylate kinase, found in Brucella abortus (strain S19).